A 500-amino-acid polypeptide reads, in one-letter code: Probable cytosol aminopeptidase (500 aa).

The Mn(2+) site is built by lysine 267 and aspartate 272. Lysine 279 is an active-site residue. Mn(2+) contacts are provided by aspartate 290, aspartate 349, and glutamate 351. Arginine 353 is an active-site residue.

The protein belongs to the peptidase M17 family. Mn(2+) serves as cofactor.

Its subcellular location is the cytoplasm. The catalysed reaction is Release of an N-terminal amino acid, Xaa-|-Yaa-, in which Xaa is preferably Leu, but may be other amino acids including Pro although not Arg or Lys, and Yaa may be Pro. Amino acid amides and methyl esters are also readily hydrolyzed, but rates on arylamides are exceedingly low.. It carries out the reaction Release of an N-terminal amino acid, preferentially leucine, but not glutamic or aspartic acids.. Presumably involved in the processing and regular turnover of intracellular proteins. Catalyzes the removal of unsubstituted N-terminal amino acids from various peptides. The chain is Probable cytosol aminopeptidase from Tolumonas auensis (strain DSM 9187 / NBRC 110442 / TA 4).